A 1091-amino-acid chain; its full sequence is Multiple epidermal growth factor-like domains protein 11 (1091 aa).

Positions 1 to 18 (MAPSAVGLLVFLLQAALA) are cleaved as a signal peptide. Topologically, residues 19–847 (LNPEDPNVCS…SPALGAERHS (829 aa)) are extracellular. One can recognise an EMI domain in the interval 23-100 (DPNVCSHWES…YYENGDFCIP (78 aa)). 14 cysteine pairs are disulfide-bonded: cysteine 27–cysteine 88, cysteine 53–cysteine 62, cysteine 87–cysteine 98, cysteine 102–cysteine 117, cysteine 119–cysteine 128, cysteine 145–cysteine 153, cysteine 147–cysteine 160, cysteine 162–cysteine 171, cysteine 184–cysteine 196, cysteine 190–cysteine 203, cysteine 205–cysteine 214, cysteine 227–cysteine 239, cysteine 233–cysteine 246, and cysteine 248–cysteine 257. EGF-like domains lie at 94 to 129 (NGDFCIPLCTEECMHGRCVSPDTCHCEPGWGGPDCS), 142 to 172 (SNRCQCQNGALCNPITGACVCAPGFRGWRCE), 180 to 215 (HGKGCQLLCQCHHGASCDPRTGECLCAPGYTGVYCE), 223 to 258 (HGAHCELRCPCQNGGTCHHITGECACPPGWTGAVCA), 266 to 301 (FGQNCSQDCPCHHGGQCDHVTGQCHCTAGYMGDRCQ), 314 to 344 (SQRCDCHNGGQCSPATGACECEPGYKGPSCQ), 398 to 433 (YGNGCQLPCTCQNGADCHSITGSCTCAPGFMGEVCA), 441 to 476 (YGPNCSSVCSCSNGGTCSPVDGSCTCREGWQGLDCS), and 484 to 519 (WGLNCNETCICANGAACSPFDGSCACTPGWLGDSCE). An N-linked (GlcNAc...) asparagine glycan is attached at asparagine 269. Cystine bridges form between cysteine 270-cysteine 282, cysteine 276-cysteine 289, cysteine 291-cysteine 300, cysteine 317-cysteine 325, cysteine 319-cysteine 332, cysteine 334-cysteine 343, cysteine 402-cysteine 414, cysteine 408-cysteine 421, cysteine 423-cysteine 432, cysteine 445-cysteine 457, cysteine 451-cysteine 464, cysteine 466-cysteine 475, cysteine 488-cysteine 500, cysteine 494-cysteine 507, and cysteine 509-cysteine 518. Asparagine 530 carries an N-linked (GlcNAc...) asparagine glycan. EGF-like domains follow at residues 570–605 (WGPNCSVSCSCENGGSCSPEDGSCECAPGFRGPLCQ), 613–650 (YGHGCAQPCPLCVHSRGPCHHISGICECLPGFSGALCN), 658–693 (FGQDCAQLCSCANNGTCSPIDGSCQCFPGWIGKDCS), 706–736 (FHTCSCHNGASCSAEDGACHCTPGWTGLFCT), 749–779 (GHICQCQNGASCDHITGKCTCRTGFSGRHCE), and 787–822 (FGYGCQQLCECMNNATCDHVTGTCYCSPGFKGIRCD). 18 disulfides stabilise this stretch: cysteine 574–cysteine 586, cysteine 580–cysteine 593, cysteine 595–cysteine 604, cysteine 617–cysteine 631, cysteine 621–cysteine 638, cysteine 640–cysteine 649, cysteine 662–cysteine 674, cysteine 668–cysteine 681, cysteine 683–cysteine 692, cysteine 709–cysteine 717, cysteine 711–cysteine 724, cysteine 726–cysteine 735, cysteine 752–cysteine 760, cysteine 754–cysteine 767, cysteine 769–cysteine 778, cysteine 791–cysteine 803, cysteine 797–cysteine 810, and cysteine 812–cysteine 821. Residues 848–868 (VGAVTGIVLLLFLVVVLLGLF) traverse the membrane as a helical segment. Residues 869–1091 (AWRRRRQKEK…NIYEVGRCLT (223 aa)) lie on the Cytoplasmic side of the membrane.

The protein belongs to the MEGF family. As to quaternary structure, homomer. Does not interact with MEGF10.

It localises to the cell membrane. Its subcellular location is the basolateral cell membrane. In terms of biological role, may regulate the mosaic spacing of specific neuron subtypes in the retina through homotypic retinal neuron repulsion. Mosaics provide a mechanism to distribute each cell type evenly across the retina, ensuring that all parts of the visual field have access to a full set of processing elements. This is Multiple epidermal growth factor-like domains protein 11 (Megf11) from Mus musculus (Mouse).